The following is a 366-amino-acid chain: 5-hydroxytryptamine receptor 1F (366 aa).

Over 1–24 (MDFLNSSDQNLTSEELLNRMPSKI) the chain is Extracellular. N-linked (GlcNAc...) asparagine glycosylation is found at asparagine 5 and asparagine 10. A helical transmembrane segment spans residues 25–49 (LVSLTLSGLALMTTTINSLVIAAII). The Cytoplasmic portion of the chain corresponds to 50–59 (VTRKLHHPAN). The chain crosses the membrane as a helical span at residues 60–81 (YLICSLAVTDFLVAVLVMPFSI). Topologically, residues 82–96 (VYIVRESWIMGQVVC) are extracellular. A disulfide bond links cysteine 96 and cysteine 172. The chain crosses the membrane as a helical span at residues 97–119 (DIWLSVDITCCTCSILHLSAIAL). Aspartate 103 and cysteine 107 together coordinate serotonin. A DRY motif; important for ligand-induced conformation changes motif is present at residues 120–122 (DRY). Topologically, residues 120–139 (DRYRAITDAVEYARKRTPKH) are cytoplasmic. A helical transmembrane segment spans residues 140–159 (AGIMITIVWIISVFISMPPL). Residues 160 to 178 (FWRHQGTSRDDECIIKHDH) lie on the Extracellular side of the membrane. A helical membrane pass occupies residues 179 to 202 (IVSTIYSTFGAFYIPLALILILYY). Residues 203–291 (KIYRAAKTLY…KISGTRERKA (89 aa)) are Cytoplasmic-facing. Residues 292 to 315 (ATTLGLILGAFVICWLPFFVKELV) traverse the membrane as a helical segment. Topologically, residues 316-327 (VNVCDKCKISEE) are extracellular. The helical transmembrane segment at 328-350 (MSNFLAWLGYLNSLINPLIYTIF) threads the bilayer. The short motif at 343-347 (NPLIY) is the NPxxY motif; important for ligand-induced conformation changes and signaling element. Residues 351-366 (NEDFKKAFQKLVRCRC) are Cytoplasmic-facing.

It belongs to the G-protein coupled receptor 1 family.

It localises to the cell membrane. Functionally, G-protein coupled receptor for 5-hydroxytryptamine (serotonin). Also functions as a receptor for various alkaloids and psychoactive substances. Receptor for lasmiditan, a drug for the treatment of acute migraine. Ligand binding causes a conformation change that triggers signaling via guanine nucleotide-binding proteins (G proteins) and modulates the activity of downstream effectors, such as adenylate cyclase. HTR1F is coupled to G(i)/G(o) G alpha proteins and mediates inhibitory neurotransmission by inhibiting adenylate cyclase activity. This Homo sapiens (Human) protein is 5-hydroxytryptamine receptor 1F.